The following is a 909-amino-acid chain: Protein translocase subunit SecA (909 aa).

Residues Gln-85, 103–107 (GEGKT), and Asp-512 contribute to the ATP site. A disordered region spans residues 866–899 (HETSATGGEEEINKPVVKGKKIGRNDPCPCGSGK). Zn(2+) is bound by residues Cys-893, Cys-895, Cys-904, and Cys-905.

This sequence belongs to the SecA family. Monomer and homodimer. Part of the essential Sec protein translocation apparatus which comprises SecA, SecYEG and auxiliary proteins SecDF. Other proteins may also be involved. Requires Zn(2+) as cofactor.

The protein localises to the cell membrane. The protein resides in the cytoplasm. The enzyme catalyses ATP + H2O + cellular proteinSide 1 = ADP + phosphate + cellular proteinSide 2.. In terms of biological role, part of the Sec protein translocase complex. Interacts with the SecYEG preprotein conducting channel. Has a central role in coupling the hydrolysis of ATP to the transfer of proteins into and across the cell membrane, serving as an ATP-driven molecular motor driving the stepwise translocation of polypeptide chains across the membrane. This Finegoldia magna (strain ATCC 29328 / DSM 20472 / WAL 2508) (Peptostreptococcus magnus) protein is Protein translocase subunit SecA.